A 310-amino-acid chain; its full sequence is Olfactory receptor 8B12 (310 aa).

The Extracellular portion of the chain corresponds to 1–24 (MAAKNSSVTEFILEGLTHQPGLRI). An N-linked (GlcNAc...) asparagine glycan is attached at Asn-5. Residues 25 to 45 (PLFFLFLGFYTVTVVGNLGLI) traverse the membrane as a helical segment. Topologically, residues 46 to 53 (TLIGLNSH) are cytoplasmic. Residues 54–74 (LHTPMYFFLFNLSLIDFCFST) traverse the membrane as a helical segment. At 75 to 98 (TITPKMLMSFVSRKNIISFTGCMT) the chain is on the extracellular side. A disulfide bridge links Cys-96 with Cys-188. The chain crosses the membrane as a helical span at residues 99 to 119 (QLFFFCFFVVSESFILSAMAY). Over 120-138 (DRYVAICNPLLYTVTMSCQ) the chain is Cytoplasmic. The chain crosses the membrane as a helical span at residues 139–159 (VCLLLLLGAYGMGFAGAMAHT). Residues 160 to 196 (GSIMNLTFCADNLVNHFMCDILPLLELSCNSSYMNEL) lie on the Extracellular side of the membrane. 2 N-linked (GlcNAc...) asparagine glycosylation sites follow: Asn-164 and Asn-189. Residues 197–216 (VVFIVVAVDVGMPIVTVFIS) traverse the membrane as a helical segment. Topologically, residues 217–236 (YALILSSILHNSSTEGRSKA) are cytoplasmic. A helical membrane pass occupies residues 237-257 (FSTCSSHIIVVSLFFGSGAFM). Residues 258–270 (YLKPLSILPLEQG) are Extracellular-facing. A helical transmembrane segment spans residues 271-291 (KVSSLFYTIIVPVLNPLIYSL). Topologically, residues 292 to 310 (RNKDVKVALRRTLGRKIFS) are cytoplasmic.

This sequence belongs to the G-protein coupled receptor 1 family.

Its subcellular location is the cell membrane. In terms of biological role, odorant receptor. The polypeptide is Olfactory receptor 8B12 (OR8B12) (Homo sapiens (Human)).